Reading from the N-terminus, the 161-residue chain is Nucleotide-binding protein Rmet_2899 (161 aa).

The protein belongs to the YajQ family.

In terms of biological role, nucleotide-binding protein. The protein is Nucleotide-binding protein Rmet_2899 of Cupriavidus metallidurans (strain ATCC 43123 / DSM 2839 / NBRC 102507 / CH34) (Ralstonia metallidurans).